The following is a 314-amino-acid chain: Probable 2-(5''-triphosphoribosyl)-3'-dephosphocoenzyme-A synthase (314 aa).

This sequence belongs to the CitG/MdcB family.

The catalysed reaction is 3'-dephospho-CoA + ATP = 2'-(5''-triphospho-alpha-D-ribosyl)-3'-dephospho-CoA + adenine. The polypeptide is Probable 2-(5''-triphosphoribosyl)-3'-dephosphocoenzyme-A synthase (Photobacterium profundum (strain SS9)).